A 254-amino-acid polypeptide reads, in one-letter code: Hydroxyacylglutathione hydrolase (254 aa).

His53, His55, Asp57, His58, His111, Asp128, and His166 together coordinate Zn(2+).

Belongs to the metallo-beta-lactamase superfamily. Glyoxalase II family. Monomer. Zn(2+) is required as a cofactor.

The enzyme catalyses an S-(2-hydroxyacyl)glutathione + H2O = a 2-hydroxy carboxylate + glutathione + H(+). It functions in the pathway secondary metabolite metabolism; methylglyoxal degradation; (R)-lactate from methylglyoxal: step 2/2. Thiolesterase that catalyzes the hydrolysis of S-D-lactoyl-glutathione to form glutathione and D-lactic acid. The sequence is that of Hydroxyacylglutathione hydrolase from Aeromonas hydrophila subsp. hydrophila (strain ATCC 7966 / DSM 30187 / BCRC 13018 / CCUG 14551 / JCM 1027 / KCTC 2358 / NCIMB 9240 / NCTC 8049).